The sequence spans 222 residues: Glutathione transferase GST 23 (222 aa).

A GST N-terminal domain is found at 4 to 83 (KGVKVLGMWA…YIDEVWKGGY (80 aa)). Glutathione is bound by residues S14, K41, V55, and 67–68 (ES). One can recognise a GST C-terminal domain in the interval 89–220 (DPYERAQARF…ANKARREQLL (132 aa)).

Belongs to the GST superfamily.

It carries out the reaction RX + glutathione = an S-substituted glutathione + a halide anion + H(+). Involved in multiple disease resistance (MDR). The chain is Glutathione transferase GST 23 from Zea mays (Maize).